The primary structure comprises 637 residues: MNTGIIDLFDNHVDSIPTILPHQLATLDYLVRTIIDENRSVLLFHIMGSGKTIIALLFALIASRFKKVHILVPNINILKIFNYNMGVAMNLFNDEFIAENIFIHSTTSFYSLNYNDNVINYNGLSRYNNSIFIVDEAHNIFGNNTGELMTVIKNKNKIPFLLLSGSPITNTPNTLGHIIDLMSEETIDFGEIISRGKKVIQTLLNERGVNVLKDLLKGRISYYEMPDKDLPTIRYHGRKFLDTRVVYCHMSKLQERDYMITRRQLCYHEMFDKNMYNVSMAVLGQLNLMNNLDTLFQEQDKELYPNLKINNGVLYGEELVTLNISSKFKYFINRIQTLNGKHFIYFSNSTYGGLVIKYIMLSNGYSEYNGSQGTNPHMINGKPKTFAIVTSKMKSSLEDLLDVYNSPENDDGSQLMFLFSSNIMSESYTLKEVRHIWFMTIPDTFSQYNQILGRSIRKFSYVDISEPVNVYLLAAVYSDFNDEVTSLNDYTQDELINVLPFDIKKLLYLKFKTKETNRIYSILQEMSETYSLPPHPSIVKVLLGELVRQFFYNNSRIKYNDAKLLKMVTSVIKNKEDARNYIDDIVNGHFFVSNKVFDKSLLYKYENDIITVPFRLSYEPFVWGVNFRKEYNVVSSP.

One can recognise a Helicase ATP-binding domain in the interval 32 to 185 (RTIIDENRSV…GHIIDLMSEE (154 aa)). Residue 45-52 (HIMGSGKT) participates in ATP binding. The DEXH box motif lies at 135–138 (DEAH). Residues 327–507 (KFKYFINRIQ…VLPFDIKKLL (181 aa)) enclose the Helicase C-terminal domain.

The protein belongs to the helicase family. VETF subfamily. As to quaternary structure, heterodimer of a 70 kDa and a 82 kDa subunit. Part of the early transcription complex composed of ETF, RAP94/OPG109, and the DNA-directed RNA polymerase.

Its subcellular location is the virion. Its function is as follows. Acts with RNA polymerase to initiate transcription from early gene promoters. Is recruited by the RPO-associated protein of 94 kDa RAP94/OPG109 to form the early transcription complex, which also contains the core RNA polymerase. ETF heterodimer binds to early gene promoters. This is Early transcription factor 70 kDa subunit (OPG118) from Homo sapiens (Human).